We begin with the raw amino-acid sequence, 208 residues long: Protein-L-isoaspartate O-methyltransferase (208 aa).

Residue S59 is part of the active site.

The protein belongs to the methyltransferase superfamily. L-isoaspartyl/D-aspartyl protein methyltransferase family.

Its subcellular location is the cytoplasm. It catalyses the reaction [protein]-L-isoaspartate + S-adenosyl-L-methionine = [protein]-L-isoaspartate alpha-methyl ester + S-adenosyl-L-homocysteine. Functionally, catalyzes the methyl esterification of L-isoaspartyl residues in peptides and proteins that result from spontaneous decomposition of normal L-aspartyl and L-asparaginyl residues. It plays a role in the repair and/or degradation of damaged proteins. The sequence is that of Protein-L-isoaspartate O-methyltransferase from Citrobacter koseri (strain ATCC BAA-895 / CDC 4225-83 / SGSC4696).